The chain runs to 204 residues: Proteasome subunit beta 2 (204 aa).

Positions 1–6 are cleaved as a propeptide — removed in mature form; by autocatalysis; the sequence is MEVLPG. Thr7 serves as the catalytic Nucleophile.

This sequence belongs to the peptidase T1B family. The 20S proteasome core is composed of 14 alpha and 14 beta subunits that assemble into four stacked heptameric rings, resulting in a barrel-shaped structure. The two inner rings, each composed of seven catalytic beta subunits, are sandwiched by two outer rings, each composed of seven alpha subunits. The catalytic chamber with the active sites is on the inside of the barrel. Has a gated structure, the ends of the cylinder being occluded by the N-termini of the alpha-subunits. Is capped at one or both ends by the proteasome regulatory ATPase, PAN.

It is found in the cytoplasm. It catalyses the reaction Cleavage of peptide bonds with very broad specificity.. Its activity is regulated as follows. The formation of the proteasomal ATPase PAN-20S proteasome complex, via the docking of the C-termini of PAN into the intersubunit pockets in the alpha-rings, triggers opening of the gate for substrate entry. Interconversion between the open-gate and close-gate conformations leads to a dynamic regulation of the 20S proteasome proteolysis activity. Functionally, component of the proteasome core, a large protease complex with broad specificity involved in protein degradation. The sequence is that of Proteasome subunit beta 2 from Thermofilum pendens (strain DSM 2475 / Hrk 5).